The sequence spans 419 residues: Tetraspanning orphan receptor (419 aa).

Topologically, residues 1 to 28 are cytoplasmic; it reads MPRAPALLTNDARHQFTCCLCLHVRTGT. Residues 29-49 traverse the membrane as a helical segment; that stretch reads IIFGITQIIIQLVFISFLFLM. Residues 50-165 are Extracellular-facing; it reads TFNPRLIPED…EVKIKHFSPY (116 aa). Residues 166-186 traverse the membrane as a helical segment; that stretch reads IAVCVTTFSLAFCCFMVHGAI. Residues 187–193 are Cytoplasmic-facing; the sequence is TKQPTHL. A helical membrane pass occupies residues 194–214; the sequence is LPFFFIQVFDLIICLIHILGF. Residues 215–240 lie on the Extracellular side of the membrane; that stretch reads MSSTSDLRLMIHTKTGPIYIKSTGFT. Residues 241 to 261 form a helical membrane-spanning segment; sequence FIILSISCMMLAFKAYCLGMV. At 262 to 419 the chain is on the cytoplasmic side; sequence WDCYKYLMLN…SAPSNAHSSC (158 aa). The segment covering 303 to 316 has biased composition (low complexity); it reads NNSIGNSGSPNEPN. The tract at residues 303-328 is disordered; that stretch reads NNSIGNSGSPNEPNTRPRPEPITYDP.

As to quaternary structure, interacts (via N-terminal extracellular domain) with human C2a. Post-translationally, phosphorylated on tyrosine residues.

It is found in the cell membrane. Functionally, cell surface receptor that binds to human complement C2a protein. This results in inhibition of the classical and lectin pathways of complement activation, probably due to interference with binding of C2a to C4b and interference with cleavage by C1 or MASP2 such that C3 convertase cannot be formed. This infers resistance to complement-mediated cell lysis, allowing parasite survival and infection. In Schistosoma mansoni (Blood fluke), this protein is Tetraspanning orphan receptor.